Reading from the N-terminus, the 372-residue chain is Flap endonuclease 1 (372 aa).

An N-domain region spans residues 1–105 (MGVKGLNQLI…GELEKRLLRR (105 aa)). Residue aspartate 34 coordinates Mg(2+). Residues arginine 47 and arginine 71 each coordinate DNA. Mg(2+) is bound by residues aspartate 87, glutamate 159, glutamate 161, aspartate 180, and aspartate 182. Residues 123–254 (EVLKFEKRLV…ATAFKLIKEH (132 aa)) are I-domain. Glutamate 159 contributes to the DNA binding site. 2 residues coordinate DNA: glycine 232 and aspartate 234. Aspartate 234 is a Mg(2+) binding site. The interaction with PCNA stretch occupies residues 339 to 347 (VQGRLDGFF).

The protein belongs to the XPG/RAD2 endonuclease family. FEN1 subfamily. In terms of assembly, interacts with PCNA. Three molecules of RAD27 bind to one PCNA trimer with each molecule binding to one PCNA monomer. PCNA stimulates the nuclease activity without altering cleavage specificity. Mg(2+) serves as cofactor. Phosphorylated. Phosphorylation upon DNA damage induces relocalization to the nuclear plasma.

Its subcellular location is the nucleus. The protein localises to the nucleolus. The protein resides in the nucleoplasm. It is found in the mitochondrion. Structure-specific nuclease with 5'-flap endonuclease and 5'-3' exonuclease activities involved in DNA replication and repair. During DNA replication, cleaves the 5'-overhanging flap structure that is generated by displacement synthesis when DNA polymerase encounters the 5'-end of a downstream Okazaki fragment. It enters the flap from the 5'-end and then tracks to cleave the flap base, leaving a nick for ligation. Also involved in the long patch base excision repair (LP-BER) pathway, by cleaving within the apurinic/apyrimidinic (AP) site-terminated flap. Acts as a genome stabilization factor that prevents flaps from equilibrating into structures that lead to duplications and deletions. Also possesses 5'-3' exonuclease activity on nicked or gapped double-stranded DNA, and exhibits RNase H activity. Also involved in replication and repair of rDNA and in repairing mitochondrial DNA. This chain is Flap endonuclease 1, found in Candida dubliniensis (strain CD36 / ATCC MYA-646 / CBS 7987 / NCPF 3949 / NRRL Y-17841) (Yeast).